The following is a 379-amino-acid chain: Anhydro-N-acetylmuramic acid kinase (379 aa).

9 to 16 (GTSADGVD) is an ATP binding site.

Belongs to the anhydro-N-acetylmuramic acid kinase family.

The enzyme catalyses 1,6-anhydro-N-acetyl-beta-muramate + ATP + H2O = N-acetyl-D-muramate 6-phosphate + ADP + H(+). Its pathway is amino-sugar metabolism; 1,6-anhydro-N-acetylmuramate degradation. The protein operates within cell wall biogenesis; peptidoglycan recycling. Catalyzes the specific phosphorylation of 1,6-anhydro-N-acetylmuramic acid (anhMurNAc) with the simultaneous cleavage of the 1,6-anhydro ring, generating MurNAc-6-P. Is required for the utilization of anhMurNAc either imported from the medium or derived from its own cell wall murein, and thus plays a role in cell wall recycling. This chain is Anhydro-N-acetylmuramic acid kinase, found in Synechococcus sp. (strain CC9605).